A 368-amino-acid chain; its full sequence is Ribosomal RNA large subunit methyltransferase M (368 aa).

S-adenosyl-L-methionine contacts are provided by residues Ser-192, 225–228 (APGG), Asp-244, Asp-264, and Asp-281. Catalysis depends on Lys-310, which acts as the Proton acceptor.

This sequence belongs to the class I-like SAM-binding methyltransferase superfamily. RNA methyltransferase RlmE family. RlmM subfamily. In terms of assembly, monomer.

The protein resides in the cytoplasm. The catalysed reaction is cytidine(2498) in 23S rRNA + S-adenosyl-L-methionine = 2'-O-methylcytidine(2498) in 23S rRNA + S-adenosyl-L-homocysteine + H(+). Catalyzes the 2'-O-methylation at nucleotide C2498 in 23S rRNA. This is Ribosomal RNA large subunit methyltransferase M from Colwellia psychrerythraea (strain 34H / ATCC BAA-681) (Vibrio psychroerythus).